A 1186-amino-acid chain; its full sequence is Pesticidal crystal protein Cry14Aa (1186 aa).

The protein belongs to the delta endotoxin family.

Functionally, promotes colloidosmotic lysis by binding to the midgut epithelial cells of insects. The protein is Pesticidal crystal protein Cry14Aa (cry14Aa) of Bacillus thuringiensis subsp. sotto.